The sequence spans 204 residues: Small ribosomal subunit protein uS4 (204 aa).

Residues 94-157 form the S4 RNA-binding domain; the sequence is RRLDNVVYRL…KKLEVFKENL (64 aa).

The protein belongs to the universal ribosomal protein uS4 family. As to quaternary structure, part of the 30S ribosomal subunit. Contacts protein S5. The interaction surface between S4 and S5 is involved in control of translational fidelity.

In terms of biological role, one of the primary rRNA binding proteins, it binds directly to 16S rRNA where it nucleates assembly of the body of the 30S subunit. Its function is as follows. With S5 and S12 plays an important role in translational accuracy. This Sulfurihydrogenibium sp. (strain YO3AOP1) protein is Small ribosomal subunit protein uS4.